The sequence spans 521 residues: Protein TESPA1 (521 aa).

At serine 311 the chain carries Phosphoserine. The segment covering 331 to 341 has biased composition (polar residues); it reads QQDSDLGQFSQ. Disordered regions lie at residues 331–351 and 461–521; these read QQDS…AEGK and QQKW…GKDS. Residues 466–475 show a composition bias toward basic and acidic residues; the sequence is QSVDRPELRR. Residues 485–498 show a composition bias toward acidic residues; sequence FDLEEVQSNSEEEQ. Basic residues predominate over residues 505–514; that stretch reads SRPRHPHHHQ.

In terms of assembly, interacts with PLCG1 and GRB2; the association is increased with prolonged stimulation of the TCR and may facilitate the assembly of the LAT signalosome. Interacts with ITPR1. Also interacts with ITPR3. Interacts with HSPA9. In terms of processing, may be phosphorylated in response to store-operated Ca(+2) entry.

It is found in the cytoplasm. It localises to the endoplasmic reticulum membrane. Functionally, required for the development and maturation of T-cells, its function being essential for the late stages of thymocyte development. Plays a role in T-cell antigen receptor (TCR)-mediated activation of the ERK and NFAT signaling pathways, possibly by serving as a scaffolding protein that promotes the assembly of the LAT signalosome in thymocytes. May play a role in the regulation of inositol 1,4,5-trisphosphate receptor-mediated Ca(2+) release and mitochondrial Ca(2+) uptake via the mitochondria-associated endoplasmic reticulum membrane (MAM) compartment. This chain is Protein TESPA1 (TESPA1), found in Homo sapiens (Human).